Reading from the N-terminus, the 318-residue chain is MNLNYLDFEQPIADLEGKIEELQLVGSGNALNLSDELERLRQKSAKQTESIYSNLTPWQIVQVARHPQRPYSSDYISRMFEDWDELHGDRHFGDDKAIIGGVGRIDGKPVMVIGEEKGRSVKDKVYRNFGMPKPEGYRKALRLMEMAERFKMPVLTLIDTPGAYPGIDSEERGISESIAQNLAVMSRLRTPIICTVIGEGSSGGALAIGVGDQLNMLQYSTYFVISPEGCANIIWKTVEKAPLAAEAMGVTSSVLADLGIVDETIPEPLGGAHRDIDAMALKLKERLVSQLDRLQAVPIEELLDTRYQRLMSYGNSAV.

The CoA carboxyltransferase C-terminal domain occupies 32 to 293; it reads NLSDELERLR…KERLVSQLDR (262 aa).

This sequence belongs to the AccA family. Acetyl-CoA carboxylase is a heterohexamer composed of biotin carboxyl carrier protein (AccB), biotin carboxylase (AccC) and two subunits each of ACCase subunit alpha (AccA) and ACCase subunit beta (AccD).

Its subcellular location is the cytoplasm. It carries out the reaction N(6)-carboxybiotinyl-L-lysyl-[protein] + acetyl-CoA = N(6)-biotinyl-L-lysyl-[protein] + malonyl-CoA. The protein operates within lipid metabolism; malonyl-CoA biosynthesis; malonyl-CoA from acetyl-CoA: step 1/1. Functionally, component of the acetyl coenzyme A carboxylase (ACC) complex. First, biotin carboxylase catalyzes the carboxylation of biotin on its carrier protein (BCCP) and then the CO(2) group is transferred by the carboxyltransferase to acetyl-CoA to form malonyl-CoA. The chain is Acetyl-coenzyme A carboxylase carboxyl transferase subunit alpha from Saccharophagus degradans (strain 2-40 / ATCC 43961 / DSM 17024).